Here is a 576-residue protein sequence, read N- to C-terminus: MGNNCVGPSAAGQNGFFANVALWRPRPADAAPPALPPPSSAPSDQAPEPVTIPPSEHSSHHSSRSTDPSTPTSAAEQPANKAAPKVKRVQSAGLLADSVLKRDVNTARLKDLYTIGKKLGQGQFGTTYLCVEKATGREFACKSIAKRKLLTQEDVEDVRREIQIMHHLAGHANVVSIVGAYEDAVAVQLVMELCAGGELFDRIIQRGHYSEKAAAQLARVIVGVIEACHSLGVMHRDLKPENFLFIHQKEDSPLKAIDFGLSIFFKPGETFTDVVGSPYYVAPEVLMKHYGREVDVWSAGVIIYILLSGVPPFWDESEQGIFEQVLKGDLDFSSEPWPNISESAKDLVRKMLIRDPKKRLTAHEALCHPWVCVDGVAPDKPLDSAVLSRLKQFSAMNKLKKMALRVIAESLSEEEIAGLKEMFKMLDTDNSGHITLEELKTGLQRVGANLMDSEIDALMEAADIDNSGTIDYGEFIAATLHINKVEKEDKLFAAFSYFDKDGSGYITQDELQKACEEFGIGDTRIEDIIGDIDQDNDGRIDYNEFVEMMQKGNNAMGKMGQHSTGNFGLGEALKLR.

G2 carries N-myristoyl glycine lipidation. Residues 27-88 (PADAAPPALP…ANKAAPKVKR (62 aa)) are disordered. Low complexity predominate over residues 41 to 56 (APSDQAPEPVTIPPSE). The region spanning 113-371 (YTIGKKLGQG…AHEALCHPWV (259 aa)) is the Protein kinase domain. Residues 119–127 (LGQGQFGTT) and K142 each bind ATP. The active-site Proton acceptor is D237. Residues 377 to 407 (APDKPLDSAVLSRLKQFSAMNKLKKMALRVI) are autoinhibitory domain. EF-hand domains are found at residues 414–449 (EEIA…VGAN), 450–485 (LMDS…INKV), 486–521 (EKED…FGIG), and 522–555 (DTRI…GNNA). 20 residues coordinate Ca(2+): D427, D429, S431, H433, E438, D463, D465, S467, T469, E474, D499, D501, S503, Y505, E510, D533, D535, D537, R539, and E544.

Belongs to the protein kinase superfamily. Ser/Thr protein kinase family. CDPK subfamily.

Its subcellular location is the membrane. It carries out the reaction L-seryl-[protein] + ATP = O-phospho-L-seryl-[protein] + ADP + H(+). It catalyses the reaction L-threonyl-[protein] + ATP = O-phospho-L-threonyl-[protein] + ADP + H(+). With respect to regulation, activated by calcium. Autophosphorylation may play an important role in the regulation of the kinase activity. Its function is as follows. May play a role in signal transduction pathways that involve calcium as a second messenger. The protein is Calcium-dependent protein kinase 11 of Oryza sativa subsp. japonica (Rice).